A 251-amino-acid polypeptide reads, in one-letter code: Aquaporin TIP1-1 (251 aa).

M1 bears the N-acetylmethionine mark. Residues 1 to 23 lie on the Cytoplasmic side of the membrane; the sequence is MPIRNIAIGRPDEATRPDALKAA. The helical transmembrane segment at 24-44 threads the bilayer; it reads LAEFISTLIFVVAGSGSGMAF. Residues 45–56 are Vacuolar-facing; that stretch reads NKLTENGATTPS. A helical membrane pass occupies residues 57–77; the sequence is GLVAAAVAHAFGLFVAVSVGA. The Cytoplasmic segment spans residues 78 to 103; that stretch reads NISGGHVNPAVTFGAFIGGNITLLRG. The NPA 1 motif lies at 85-87; that stretch reads NPA. A helical transmembrane segment spans residues 104-124; it reads ILYWIAQLLGSVVACLILKFA. Topologically, residues 125-143 are vacuolar; the sequence is TGGLAVPAFGLSAGVGVLN. Residues 144 to 164 traverse the membrane as a helical segment; the sequence is AFVFEIVMTFGLVYTVYATAI. Residues 165 to 172 lie on the Cytoplasmic side of the membrane; sequence DPKNGSLG. Residues 173–193 traverse the membrane as a helical segment; sequence TIAPIAIGFIVGANILAGGAF. The Vacuolar portion of the chain corresponds to 194-218; that stretch reads SGASMNPAVAFGPAVVSWTWTNHWV. Positions 199–201 match the NPA 2 motif; that stretch reads NPA. The chain crosses the membrane as a helical span at residues 219–239; that stretch reads YWAGPLVGGGIAGLIYEVFFI. At 240–251 the chain is on the cytoplasmic side; that stretch reads NTTHEQLPTTDY.

The protein belongs to the MIP/aquaporin (TC 1.A.8) family. TIP (TC 1.A.8.10) subfamily. Interacts with cucumber mosaic virus (CMV) Protein 1a. As to expression, in all the vegetative organs, but not in seeds. Preferentially expressed in roots.

The protein resides in the vacuole membrane. In terms of biological role, water channel required to facilitate the transport of water, diffusion of amino acids and/or peptides from the vacuolar compartment to the cytoplasm. Does not promote glycerol permeability. May play a role in the control of cell turgor and cell expansion. Its function is impaired by Hg(2+). May be involved in a vesicle-based metabolite routing through or between pre-vacuolar compartments and the central vacuole. Transports urea in yeast cells in a pH-independent manner. Transports H(2)O(2) in yeast cells. The protein is Aquaporin TIP1-1 (TIP1-1) of Arabidopsis thaliana (Mouse-ear cress).